Reading from the N-terminus, the 398-residue chain is uncharacterized protein (398 aa).

This sequence belongs to the glycosyltransferase 2 family.

This is an uncharacterized protein from Escherichia coli (strain K12).